The sequence spans 199 residues: Prostatic spermine-binding protein (199 aa).

An N-terminal signal peptide occupies residues 1-18 (MLLLLTLAFLASPTCRAQ). One can recognise a Jacalin-type lectin domain in the interval 19 to 151 (NVLGNAAGKY…VRGIGFKWGN (133 aa)). Residue Asn62 is glycosylated (N-linked (GlcNAc...) asparagine). A disordered region spans residues 159–199 (HYNNKEDKADNKDADNKDADNKDDGDEDDDGNDDDDQKDES). Residues 160-180 (YNNKEDKADNKDADNKDADNK) show a composition bias toward basic and acidic residues. The segment covering 181-199 (DDGDEDDDGNDDDDQKDES) has biased composition (acidic residues).

This sequence to rat SBP. Prostate.

Its function is as follows. This protein seems to be functional equivalent to rat prostatic spermine-binding protein, which is involved in polyamine binding. The polypeptide is Prostatic spermine-binding protein (Sbp) (Mus musculus (Mouse)).